A 475-amino-acid chain; its full sequence is UDP-N-acetylmuramate--L-alanine ligase (475 aa).

125 to 131 lines the ATP pocket; that stretch reads GTHGKTT.

This sequence belongs to the MurCDEF family.

It is found in the cytoplasm. It carries out the reaction UDP-N-acetyl-alpha-D-muramate + L-alanine + ATP = UDP-N-acetyl-alpha-D-muramoyl-L-alanine + ADP + phosphate + H(+). Its pathway is cell wall biogenesis; peptidoglycan biosynthesis. Functionally, cell wall formation. In Actinobacillus pleuropneumoniae serotype 7 (strain AP76), this protein is UDP-N-acetylmuramate--L-alanine ligase.